Reading from the N-terminus, the 424-residue chain is Neurotensin receptor type 1 (424 aa).

The interval 1–23 (MHLNSSVPQGTPGEPDAQPFSGP) is disordered. Residues 1 to 68 (MHLNSSVPQG…TDIYSKVLVT (68 aa)) lie on the Extracellular side of the membrane. 3 N-linked (GlcNAc...) asparagine glycosylation sites follow: Asn4, Asn38, and Asn42. Residues 69-89 (AIYLALFVVGTVGNSVTAFTL) traverse the membrane as a helical segment. Residues 90 to 103 (ARKKSLQSLQSTVH) lie on the Cytoplasmic side of the membrane. A helical membrane pass occupies residues 104–123 (YHLGSLALSDLLILLLAMPV). Over 124-143 (ELYNFIWVHHPWAFGDAGCR) the chain is Extracellular. The cysteines at positions 142 and 225 are disulfide-linked. Residues 144–165 (GYYFLRDACTYATALNVASLSV) traverse the membrane as a helical segment. The Cytoplasmic segment spans residues 166–185 (ERYLAICHPFKAKTLMSRSR). The chain crosses the membrane as a helical span at residues 186-206 (TKKFISAIWLASALLAIPMLF). Residues 207 to 235 (TMGLQNRSGDGTHPGGLVCTPIVDTATVK) are Extracellular-facing. The chain crosses the membrane as a helical span at residues 236–260 (VVIQVNTFMSFLFPMLVISILNTVI). Over 261–308 (ANKLTVMVHQAAEQGRVCTVGTHNGLEHSTFNMTIEPGRVQALRHGVL) the chain is Cytoplasmic. A helical membrane pass occupies residues 309–330 (VLRAVVIAFVVCWLPYHVRRLM). A neurotensin binding region spans residues 326 to 349 (VRRLMFCYISDEQWTTFLFDFYHY). Over 331–348 (FCYISDEQWTTFLFDFYH) the chain is Extracellular. The chain crosses the membrane as a helical span at residues 349–369 (YFYMLTNALFYVSSAINPILY). The Cytoplasmic portion of the chain corresponds to 370–424 (NLVSANFRQVFLSTLACLCPGWRHRRKKRPTFSRKPNSMSSNHAFSTSATRETLY). S-palmitoyl cysteine attachment occurs at residues Cys386 and Cys388. Positions 397 to 424 (KRPTFSRKPNSMSSNHAFSTSATRETLY) are disordered. Positions 403–424 (RKPNSMSSNHAFSTSATRETLY) are enriched in polar residues.

This sequence belongs to the G-protein coupled receptor 1 family. Neurotensin receptor subfamily. NTSR1 sub-subfamily. Interacts (palmitoylated form) with GNA11. In terms of processing, N-glycosylated. Post-translationally, palmitoylated; this is required for normal localization at membrane rafts and normal GNA11-mediated activation of down-stream signaling cascades. The palmitoylation level increases in response to neurotensin treatment. As to expression, detected in brain and small intestine.

The protein localises to the cell membrane. The protein resides in the membrane raft. Its function is as follows. G-protein coupled receptor for the tridecapeptide neurotensin (NTS). Signaling is effected via G proteins that activate a phosphatidylinositol-calcium second messenger system. Signaling leads to the activation of downstream MAP kinases and protects cells against apoptosis. In Rattus norvegicus (Rat), this protein is Neurotensin receptor type 1 (Ntsr1).